We begin with the raw amino-acid sequence, 521 residues long: Cytochrome P450 1A1 (521 aa).

Phe229 serves as a coordination point for substrate. Residue Cys463 coordinates heme.

Belongs to the cytochrome P450 family. Heme is required as a cofactor.

It localises to the endoplasmic reticulum membrane. The protein resides in the microsome membrane. The catalysed reaction is an organic molecule + reduced [NADPH--hemoprotein reductase] + O2 = an alcohol + oxidized [NADPH--hemoprotein reductase] + H2O + H(+). Cytochromes P450 are a group of heme-thiolate monooxygenases. They oxidize a variety of structurally unrelated compounds, including steroids, fatty acids, and xenobiotics. The sequence is that of Cytochrome P450 1A1 (cyp1a1) from Platichthys flesus (European flounder).